The primary structure comprises 596 residues: Sensor protein ChvG (596 aa).

Residues 1-22 are disordered; sequence MLKKTPETVSDSDDAEERGSER. Over 1–47 the chain is Cytoplasmic; that stretch reads MLKKTPETVSDSDDAEERGSERRHRIHPLTIIRRIFGNAVFSSLTRR. The helical transmembrane segment at 48-68 threads the bilayer; it reads ILFFNVAATVVLVGGILYLNQ. Topologically, residues 69-283 are periplasmic; that stretch reads FREGLIDARV…VHAERLAIMR (215 aa). The helical transmembrane segment at 284–304 threads the bilayer; sequence VFGIATLVNIVLSLLLSSTIA. An HAMP domain is found at 301–356; the sequence is STIATPLRRLSAAAIRVRRGARTREEIPDFSARQDEIGNLSIALREMTTALYDRID. Residues 305-596 lie on the Cytoplasmic side of the membrane; that stretch reads TPLRRLSAAA…SLPAAETHER (292 aa). The Histidine kinase domain maps to 364-592; the sequence is DVSHELKNPL…RFTLSLPAAE (229 aa). Residue His-367 is modified to Phosphohistidine.

It is found in the cell inner membrane. The enzyme catalyses ATP + protein L-histidine = ADP + protein N-phospho-L-histidine.. In terms of biological role, member of a two-component regulatory system ChvG/ChvI. Activates ChvI by phosphorylation (Potential). This is Sensor protein ChvG (chvG) from Agrobacterium fabrum (strain C58 / ATCC 33970) (Agrobacterium tumefaciens (strain C58)).